The following is a 258-amino-acid chain: UPF0246 protein PM0066 (258 aa).

Belongs to the UPF0246 family.

This chain is UPF0246 protein PM0066, found in Pasteurella multocida (strain Pm70).